The chain runs to 340 residues: Protein RecA (340 aa).

67 to 74 (GNESSGKT) provides a ligand contact to ATP.

It belongs to the RecA family.

The protein localises to the cytoplasm. Its function is as follows. Can catalyze the hydrolysis of ATP in the presence of single-stranded DNA, the ATP-dependent uptake of single-stranded DNA by duplex DNA, and the ATP-dependent hybridization of homologous single-stranded DNAs. It interacts with LexA causing its activation and leading to its autocatalytic cleavage. The chain is Protein RecA from Mycoplasma genitalium (strain ATCC 33530 / DSM 19775 / NCTC 10195 / G37) (Mycoplasmoides genitalium).